The primary structure comprises 27 residues: Cysteine-rich venom protein tropirin (27 aa).

This sequence belongs to the CRISP family. Contains 8 disulfide bonds. In terms of tissue distribution, expressed by the venom gland.

It is found in the secreted. Its function is as follows. Blocks contraction of smooth muscle elicited by high potassium-induced depolarization, but does not block caffeine-stimulated contraction. May target voltage-gated calcium channels on smooth muscle. The polypeptide is Cysteine-rich venom protein tropirin (Tropidechis carinatus (Australian rough-scaled snake)).